A 393-amino-acid polypeptide reads, in one-letter code: 4-hydroxyphenylpyruvate dioxygenase (393 aa).

VOC domains lie at 17-148 (AFDH…LLER) and 179-339 (FLDH…IFSK). His-182, His-267, and Glu-350 together coordinate Fe cation.

It belongs to the 4HPPD family. Requires Fe cation as cofactor. Expressed in the hypodermis and intestine.

The enzyme catalyses 3-(4-hydroxyphenyl)pyruvate + O2 = homogentisate + CO2. It participates in amino-acid degradation; L-phenylalanine degradation; acetoacetate and fumarate from L-phenylalanine: step 3/6. Its function is as follows. Key enzyme in the degradation of tyrosine. The chain is 4-hydroxyphenylpyruvate dioxygenase from Caenorhabditis elegans.